The chain runs to 26 residues: ATP synthase subunit gamma, mitochondrial (26 aa).

It belongs to the ATPase gamma chain family. F-type ATPases have 2 components, CF(1) - the catalytic core - and CF(0) - the membrane proton channel. CF(1) has five subunits: alpha(3), beta(3), gamma(1), delta(1), epsilon(1). CF(0) has three main subunits: a, b and c.

Its subcellular location is the mitochondrion. The protein resides in the mitochondrion inner membrane. Its function is as follows. Mitochondrial membrane ATP synthase (F(1)F(0) ATP synthase or Complex V) produces ATP from ADP in the presence of a proton gradient across the membrane which is generated by electron transport complexes of the respiratory chain. F-type ATPases consist of two structural domains, F(1) - containing the extramembraneous catalytic core, and F(0) - containing the membrane proton channel, linked together by a central stalk and a peripheral stalk. During catalysis, ATP synthesis in the catalytic domain of F(1) is coupled via a rotary mechanism of the central stalk subunits to proton translocation. Part of the complex F(1) domain and the central stalk which is part of the complex rotary element. The gamma subunit protrudes into the catalytic domain formed of alpha(3)beta(3). Rotation of the central stalk against the surrounding alpha(3)beta(3) subunits leads to hydrolysis of ATP in three separate catalytic sites on the beta subunits. The polypeptide is ATP synthase subunit gamma, mitochondrial (ATPC) (Spinacia oleracea (Spinach)).